Here is a 261-residue protein sequence, read N- to C-terminus: Putative quercetin 2,3-dioxygenase Ta0133 (261 aa).

Positions 17, 19, 61, and 63 each coordinate a divalent metal cation.

Belongs to the pirin family. A divalent metal cation is required as a cofactor.

The catalysed reaction is quercetin + O2 = 2-(3,4-dihydroxybenzoyloxy)-4,6-dihydroxybenzoate + CO. The protein operates within flavonoid metabolism; quercetin degradation. Functionally, putative quercetin 2,3-dioxygenase. The sequence is that of Putative quercetin 2,3-dioxygenase Ta0133 from Thermoplasma acidophilum (strain ATCC 25905 / DSM 1728 / JCM 9062 / NBRC 15155 / AMRC-C165).